A 400-amino-acid chain; its full sequence is WD repeat and FYVE domain-containing protein 2 (400 aa).

6 WD repeats span residues G22–P61, A66–T105, A112–G150, R153–L192, G197–I236, and G240–P279. The segment at W281–T352 adopts an FYVE-type zinc-finger fold. Zn(2+) is bound by residues C287, C290, C314, C317, C322, C325, C344, and C347. A WD 7 repeat occupies D364 to V399.

In terms of assembly, homodimer. Interacts (via WD repeats 1-3) with AKT1, AKT2, PRKCZ and PRKCI. Interacts with VAMP2. Forms a complex with VAMP2 and PRKCZ. Interacts with FOXO1. Forms a complex with AKT1 and FOXO1. Highly expressed in the brain (at protein level).

The protein localises to the endosome. It localises to the early endosome. It is found in the cytoplasm. In terms of biological role, acts in an adapter protein-like fashion to mediate the interaction between the kinase PRKCZ and its substrate VAMP2 and increases the PRKCZ-dependent phosphorylation of VAMP2. Positively regulates adipocyte differentiation, by facilitating the phosphorylation and thus inactivation of the anti-adipogenetic transcription factor FOXO1 by the kinase AKT1. Plays a role in endosomal control of AKT2 signaling; required for insulin-stimulated AKT2 phosphorylation and glucose uptake and insulin-stimulated phosphorylation of AKT2 substrates. Participates in transferrin receptor endocytosis. The sequence is that of WD repeat and FYVE domain-containing protein 2 (Wdfy2) from Mus musculus (Mouse).